The chain runs to 313 residues: Thiamine thiazole synthase (313 aa).

Substrate contacts are provided by residues A71, 92-93, G100, and V165; that span reads EA. C199 bears the 2,3-didehydroalanine (Cys) mark. Residues D201, H216, M268, and 278–280 contribute to the substrate site; that span reads RMG.

This sequence belongs to the THI4 family. Homooctamer. It depends on Fe cation as a cofactor. Post-translationally, during the catalytic reaction, a sulfide is transferred from Cys-199 to a reaction intermediate, generating a dehydroalanine residue.

It is found in the cytoplasm. The protein resides in the nucleus. It carries out the reaction [ADP-thiazole synthase]-L-cysteine + glycine + NAD(+) = [ADP-thiazole synthase]-dehydroalanine + ADP-5-ethyl-4-methylthiazole-2-carboxylate + nicotinamide + 3 H2O + 2 H(+). Involved in biosynthesis of the thiamine precursor thiazole. Catalyzes the conversion of NAD and glycine to adenosine diphosphate 5-(2-hydroxyethyl)-4-methylthiazole-2-carboxylic acid (ADT), an adenylated thiazole intermediate. The reaction includes an iron-dependent sulfide transfer from a conserved cysteine residue of the protein to a thiazole intermediate. The enzyme can only undergo a single turnover, which suggests it is a suicide enzyme. May have additional roles in adaptation to various stress conditions and in DNA damage tolerance. This is Thiamine thiazole synthase from Coprinopsis cinerea (strain Okayama-7 / 130 / ATCC MYA-4618 / FGSC 9003) (Inky cap fungus).